Reading from the N-terminus, the 445-residue chain is ATP-dependent protease ATPase subunit HslU (445 aa).

ATP contacts are provided by residues Ile-17, Gly-59 to Glu-64, Asp-254, Glu-319, and Arg-391.

This sequence belongs to the ClpX chaperone family. HslU subfamily. As to quaternary structure, a double ring-shaped homohexamer of HslV is capped on each side by a ring-shaped HslU homohexamer. The assembly of the HslU/HslV complex is dependent on binding of ATP.

It localises to the cytoplasm. Functionally, ATPase subunit of a proteasome-like degradation complex; this subunit has chaperone activity. The binding of ATP and its subsequent hydrolysis by HslU are essential for unfolding of protein substrates subsequently hydrolyzed by HslV. HslU recognizes the N-terminal part of its protein substrates and unfolds these before they are guided to HslV for hydrolysis. The polypeptide is ATP-dependent protease ATPase subunit HslU (Pseudomonas fluorescens (strain SBW25)).